The chain runs to 408 residues: Endo-1,4-beta-xylanase A (408 aa).

A signal peptide spans 1 to 19 (MKLSASFAALALLLPFVQA). In terms of domain architecture, CBM1 spans 20–55 (QSPVWGQCGGIGWTGPTTCTAGNVCQEYSAYYSQCI). The tract at residues 64–89 (TSVSTAPNPPPTSHTSTSSAPSGAST) is disordered. Residues 76-89 (SHTSTSSAPSGAST) are compositionally biased toward low complexity. The region spanning 88-405 (STSTAKLNTL…KPAYDGIAIG (318 aa)) is the GH10 domain. The active-site Proton donor is the Glu222. Catalysis depends on Glu327, which acts as the Nucleophile. Cys355 and Cys361 form a disulfide bridge.

Belongs to the glycosyl hydrolase 10 (cellulase F) family.

It is found in the secreted. It carries out the reaction Endohydrolysis of (1-&gt;4)-beta-D-xylosidic linkages in xylans.. Its pathway is glycan degradation; xylan degradation. Endo-1,4-beta-xylanase involved in the hydrolysis of xylan, a major structural heterogeneous polysaccharide found in plant biomass representing the second most abundant polysaccharide in the biosphere, after cellulose. The polypeptide is Endo-1,4-beta-xylanase A (xynA) (Phanerodontia chrysosporium (White-rot fungus)).